The primary structure comprises 122 residues: Large ribosomal subunit protein uL14 (122 aa).

This sequence belongs to the universal ribosomal protein uL14 family. As to quaternary structure, part of the 50S ribosomal subunit. Forms a cluster with proteins L3 and L19. In the 70S ribosome, L14 and L19 interact and together make contacts with the 16S rRNA in bridges B5 and B8.

Functionally, binds to 23S rRNA. Forms part of two intersubunit bridges in the 70S ribosome. The protein is Large ribosomal subunit protein uL14 of Xanthomonas oryzae pv. oryzae (strain MAFF 311018).